A 388-amino-acid chain; its full sequence is GTPase Obg (388 aa).

In terms of domain architecture, Obg spans 1 to 159; that stretch reads MKFVDEAVIR…RSLKLELLLL (159 aa). In terms of domain architecture, OBG-type G spans 160-333; it reads ADVGLLGMPN…LAAKLWDFIQ (174 aa). GTP contacts are provided by residues 166 to 173, 191 to 195, 213 to 216, 283 to 286, and 314 to 316; these read GMPNAGKS, FTTLV, DIPG, NKAD, and SAY. Mg(2+) contacts are provided by Ser173 and Thr193.

The protein belongs to the TRAFAC class OBG-HflX-like GTPase superfamily. OBG GTPase family. In terms of assembly, monomer. Mg(2+) is required as a cofactor.

The protein resides in the cytoplasm. An essential GTPase which binds GTP, GDP and possibly (p)ppGpp with moderate affinity, with high nucleotide exchange rates and a fairly low GTP hydrolysis rate. Plays a role in control of the cell cycle, stress response, ribosome biogenesis and in those bacteria that undergo differentiation, in morphogenesis control. The protein is GTPase Obg of Shewanella oneidensis (strain ATCC 700550 / JCM 31522 / CIP 106686 / LMG 19005 / NCIMB 14063 / MR-1).